Reading from the N-terminus, the 810-residue chain is Phenylalanine--tRNA ligase beta subunit (810 aa).

The tRNA-binding domain maps to 39 to 150 (RTWANGVVVG…ENLPLGSDVR (112 aa)). Positions 411–495 (TWSRSIFLRL…RLYGYDNFCD (85 aa)) constitute a B5 domain. Residues D473, D479, E482, and E483 each contribute to the Mg(2+) site. One can recognise an FDX-ACB domain in the interval 716–809 (STYPASDRDI…LVEKFGVNLR (94 aa)).

Belongs to the phenylalanyl-tRNA synthetase beta subunit family. Type 1 subfamily. In terms of assembly, tetramer of two alpha and two beta subunits. Requires Mg(2+) as cofactor.

The protein resides in the cytoplasm. It carries out the reaction tRNA(Phe) + L-phenylalanine + ATP = L-phenylalanyl-tRNA(Phe) + AMP + diphosphate + H(+). The chain is Phenylalanine--tRNA ligase beta subunit from Trichormus variabilis (strain ATCC 29413 / PCC 7937) (Anabaena variabilis).